The chain runs to 169 residues: MTSSDKSLSHDVFVYGSFQEPSVVNLILECSPVMVPAQLHGYHVYRLKGRLHACISPSENGLINGKILTGLTDSQLENLDMIEGSEYVRKTVEVVLTDTSEKKQVETYVWANKDDPNLYGEWDFEEWRRLHMDKFIEASTKFIEWKKNPDGRSREEFEKFVFDDPPTAA.

Position 15–20 (15–20) interacts with substrate; that stretch reads YGSFQE. Glutamate 83 serves as the catalytic Proton acceptor.

It belongs to the gamma-glutamylcyclotransferase family. In terms of tissue distribution, expressed in roots, leaves and stems.

Putative gamma-glutamylcyclotransferase. In Arabidopsis thaliana (Mouse-ear cress), this protein is Protein AIG2 B.